The following is a 164-amino-acid chain: Ubiquitin-fold modifier-conjugating enzyme 1 (164 aa).

Cys-116 functions as the Glycyl thioester intermediate in the catalytic mechanism.

The protein belongs to the ubiquitin-conjugating enzyme family. UFC1 subfamily.

In terms of biological role, E2-like enzyme which forms an intermediate with UFM1 via a thioester linkage. The protein is Ubiquitin-fold modifier-conjugating enzyme 1 of Drosophila sechellia (Fruit fly).